The primary structure comprises 156 residues: Deoxyuridine 5'-triphosphate nucleotidohydrolase (156 aa).

Belongs to the dCTP deaminase family. Archaeal dUTPase subfamily. As to quaternary structure, homotrimer.

It carries out the reaction dUTP + H2O = dUMP + diphosphate + H(+). It participates in pyrimidine metabolism; dUMP biosynthesis; dUMP from dCTP (dUTP route): step 2/2. In terms of biological role, this enzyme is involved in nucleotide metabolism: it produces dUMP, the immediate precursor of thymidine nucleotides and it decreases the intracellular concentration of dUTP so that uracil cannot be incorporated into DNA. This Methanocaldococcus jannaschii (strain ATCC 43067 / DSM 2661 / JAL-1 / JCM 10045 / NBRC 100440) (Methanococcus jannaschii) protein is Deoxyuridine 5'-triphosphate nucleotidohydrolase.